Consider the following 307-residue polypeptide: UDP-N-acetylenolpyruvoylglucosamine reductase (307 aa).

In terms of domain architecture, FAD-binding PCMH-type spans 33–197; the sequence is TGGNADFYIT…LEAAFTLAPG (165 aa). R176 is a catalytic residue. The active-site Proton donor is S226. Residue E296 is part of the active site.

The protein belongs to the MurB family. Requires FAD as cofactor.

The protein resides in the cytoplasm. The enzyme catalyses UDP-N-acetyl-alpha-D-muramate + NADP(+) = UDP-N-acetyl-3-O-(1-carboxyvinyl)-alpha-D-glucosamine + NADPH + H(+). The protein operates within cell wall biogenesis; peptidoglycan biosynthesis. Cell wall formation. This is UDP-N-acetylenolpyruvoylglucosamine reductase from Staphylococcus aureus (strain MRSA252).